Here is a 304-residue protein sequence, read N- to C-terminus: Secreted mono- and diacylglycerol lipase MDL4 (304 aa).

Positions 1–19 (MRFGGVVSLVLGFIVSVLA) are cleaved as a signal peptide. Cysteines 55 and 297 form a disulfide. N-linked (GlcNAc...) asparagine glycosylation is found at asparagine 102 and asparagine 161. Serine 171 (nucleophile) is an active-site residue. The active site involves aspartate 228. An N-linked (GlcNAc...) asparagine glycan is attached at asparagine 253. Residue histidine 281 is part of the active site.

It belongs to the AB hydrolase superfamily. Lipase family. Class 3 subfamily.

The protein localises to the secreted. It localises to the cell wall. The enzyme catalyses a monoacylglycerol + H2O = glycerol + a fatty acid + H(+). The catalysed reaction is a diacylglycerol + H2O = a monoacylglycerol + a fatty acid + H(+). Its function is as follows. Secreted lipase involved in Dandruff and seborrheic dermatitis (D/SD) probably via lipase-mediated breakdown of sebaceous lipids and release of irritating free fatty acids. Shows activity against monoglyceride and diglyceride substrates, but not triglyceride substrates and does not exhibit regio-selective production of diacylglycerols. Cleaves oleic acid from 1,2 isomers of diolein on both the 1 and the 2 position of the glycerol backbone, resulting mainly in free fatty acids but no monoolein is detected. Shows activity on monoolein and liberates mostly free fatty acids, but can also perform the reverse reaction and produce diolein. This Malassezia globosa (strain ATCC MYA-4612 / CBS 7966) (Dandruff-associated fungus) protein is Secreted mono- and diacylglycerol lipase MDL4.